We begin with the raw amino-acid sequence, 107 residues long: Transmembrane protein 213 (107 aa).

The N-terminal stretch at 1–27 (MQRLPAATRATLILSLAFASLHSACSA) is a signal peptide. Topologically, residues 28-70 (EASSSNSSSLTAHHPDPGTLEQCLNVDFCPQAARCCRTGVDEY) are extracellular. A helical transmembrane segment spans residues 71-91 (GWIAAAVGWSLWFLTLILLCV). Topologically, residues 92 to 107 (DKLMKLTPDEPKDLQA) are cytoplasmic.

It is found in the membrane. The polypeptide is Transmembrane protein 213 (TMEM213) (Homo sapiens (Human)).